A 509-amino-acid chain; its full sequence is Steroid 17-alpha-hydroxylase/17,20 lyase (509 aa).

Position 202 (Asn202) interacts with substrate. Cys442 serves as a coordination point for heme.

The protein belongs to the cytochrome P450 family. Heme serves as cofactor.

The protein resides in the endoplasmic reticulum membrane. It localises to the microsome membrane. It carries out the reaction a C21-steroid + reduced [NADPH--hemoprotein reductase] + O2 = a 17alpha-hydroxy-C21-steroid + oxidized [NADPH--hemoprotein reductase] + H2O + H(+). The catalysed reaction is progesterone + reduced [NADPH--hemoprotein reductase] + O2 = 17alpha-hydroxyprogesterone + oxidized [NADPH--hemoprotein reductase] + H2O + H(+). The enzyme catalyses pregnenolone + reduced [NADPH--hemoprotein reductase] + O2 = 17alpha-hydroxypregnenolone + oxidized [NADPH--hemoprotein reductase] + H2O + H(+). It catalyses the reaction 17alpha-hydroxyprogesterone + reduced [NADPH--hemoprotein reductase] + O2 = androst-4-ene-3,17-dione + acetate + oxidized [NADPH--hemoprotein reductase] + H2O + 2 H(+). It carries out the reaction 17alpha-hydroxyprogesterone + reduced [NADPH--hemoprotein reductase] + O2 = 16alpha,17alpha-dihydroxyprogesterone + oxidized [NADPH--hemoprotein reductase] + H2O + H(+). The catalysed reaction is 16alpha,17alpha-dihydroxyprogesterone + reduced [NADPH--hemoprotein reductase] + O2 = 6beta,16alpha,17alpha-trihydroxyprogesterone + oxidized [NADPH--hemoprotein reductase] + H2O + H(+). The enzyme catalyses 17alpha-hydroxypregnenolone + reduced [NADPH--hemoprotein reductase] + O2 = 3beta-hydroxyandrost-5-en-17-one + acetate + oxidized [NADPH--hemoprotein reductase] + H2O + 2 H(+). It catalyses the reaction 16alpha,17alpha-dihydroxypregnenolone + reduced [NADPH--hemoprotein reductase] + O2 = 3beta,16alpha-dihydroxy-androst-5-en-17-one + acetate + oxidized [NADPH--hemoprotein reductase] + H2O + 2 H(+). It carries out the reaction 3beta-hydroxyandrost-5-en-17-one + reduced [NADPH--hemoprotein reductase] + O2 = 3beta,16alpha-dihydroxy-androst-5-en-17-one + oxidized [NADPH--hemoprotein reductase] + H2O + H(+). The catalysed reaction is androst-4-ene-3,17-dione + reduced [NADPH--hemoprotein reductase] + O2 = 16alpha-hydroxyandrost-4-ene-3,17-dione + oxidized [NADPH--hemoprotein reductase] + H2O + H(+). Its pathway is steroid hormone biosynthesis. The protein operates within steroid biosynthesis; glucocorticoid biosynthesis. Regulated predominantly by intracellular cAMP levels. The 17,20-lyase activity is stimulated by cytochrome b5, which acts as an allosteric effector increasing the Vmax of the lyase activity. Its function is as follows. A cytochrome P450 monooxygenase involved in corticoid and androgen biosynthesis. Catalyzes 17-alpha hydroxylation of C21 steroids, which is common for both pathways. A second oxidative step, required only for androgen synthesis, involves an acyl-carbon cleavage. The 17-alpha hydroxy intermediates, as part of adrenal glucocorticoids biosynthesis pathway, are precursors of cortisol. Hydroxylates steroid hormones, pregnenolone and progesterone to form 17-alpha hydroxy metabolites, followed by the cleavage of the C17-C20 bond to form C19 steroids, dehydroepiandrosterone (DHEA) and androstenedione. Has 16-alpha hydroxylase activity. Catalyzes 16-alpha hydroxylation of 17-alpha hydroxy pregnenolone, followed by the cleavage of the C17-C20 bond to form 16-alpha-hydroxy DHEA. Also 16-alpha hydroxylates androgens, relevant for estriol synthesis. Mechanistically, uses molecular oxygen inserting one oxygen atom into a substrate, and reducing the second into a water molecule, with two electrons provided by NADPH via cytochrome P450 reductase (CPR; NADPH-ferrihemoprotein reductase). The protein is Steroid 17-alpha-hydroxylase/17,20 lyase (CYP17A1) of Bison bison (American bison).